We begin with the raw amino-acid sequence, 125 residues long: Prefoldin subunit beta (125 aa).

It belongs to the prefoldin subunit beta family. In terms of assembly, heterohexamer of two alpha and four beta subunits.

It is found in the cytoplasm. In terms of biological role, molecular chaperone capable of stabilizing a range of proteins. Seems to fulfill an ATP-independent, HSP70-like function in archaeal de novo protein folding. This chain is Prefoldin subunit beta, found in Sulfolobus acidocaldarius (strain ATCC 33909 / DSM 639 / JCM 8929 / NBRC 15157 / NCIMB 11770).